We begin with the raw amino-acid sequence, 273 residues long: MTVLHSIDFFSSSSAPVAIEARAPQSAFPEHHHDFYEIVIVEEGAGVHVFNGNPYTLSRGCVCFVRDHDRHLFESTDDLFLTNVLFRAPDAFRFLSGVGHFLPRECDGVYPSHWRVNGQVLQQIKCLIACLEHAPKSDRVEDIALHESVFMQLLVKLWQGCQTQAGDDQEGRLYQLLDWLQNNYSEAVEWPELADRFALPLRTLHRQLKNKTGMTPQRYLTRLRLLQARHQLCYSDNSVTDIAYLCGFGDSNHFSTLFKREFSQSPRDLRSQL.

Residues 174–272 (YQLLDWLQNN…SQSPRDLRSQ (99 aa)) enclose the HTH araC/xylS-type domain. DNA-binding regions (H-T-H motif) lie at residues 191-212 (PELA…KNKT) and 239-262 (VTDI…KREF).

Binds DNA as a dimer.

The protein localises to the cytoplasm. Its function is as follows. Activates expression of the rhaBAD and rhaT operons. This chain is HTH-type transcriptional activator RhaS, found in Yersinia pseudotuberculosis serotype I (strain IP32953).